Here is a 209-residue protein sequence, read N- to C-terminus: Large ribosomal subunit protein uL3 (209 aa).

Residues 117 to 142 (FQGPIKRHGQSRGPETHGSRYHRRPG) are disordered.

Belongs to the universal ribosomal protein uL3 family. As to quaternary structure, part of the 50S ribosomal subunit. Forms a cluster with proteins L14 and L19.

Its function is as follows. One of the primary rRNA binding proteins, it binds directly near the 3'-end of the 23S rRNA, where it nucleates assembly of the 50S subunit. This Clostridioides difficile (strain 630) (Peptoclostridium difficile) protein is Large ribosomal subunit protein uL3.